Consider the following 846-residue polypeptide: Inactive cap-specific mRNA (nucleoside-2'-O-)-methyltransferase 1B (846 aa).

A disordered region spans residues 30–50 (DDEDDFVDDPSPTEQKTKAEK). The G-patch domain occupies 44–90 (QKTKAEKKMERMGYKAGEGLGKNKQGIQEPIAISFREGKAGLGHEQW). Residues 184 to 413 (FFLNRSAMKT…ERFVVCKGLR (230 aa)) enclose the RrmJ-type SAM-dependent 2'-O-MTase domain.

The protein is Inactive cap-specific mRNA (nucleoside-2'-O-)-methyltransferase 1B of Caenorhabditis briggsae.